The chain runs to 354 residues: MEKRIVCLAGDGVGPEVMESAKEVLHMVERLYGHHFHLQDEYFGGSAIDLNGQPLPQRTLAACLASDAVLLGAVGGPRWDSAKERPEKGLLALRKGLGVFANVRPVTVESATAHLSPLKKADEIDFVVVRELTGGIYFSYPKERTDEVATDTLTYHRHEIERIVSYAFQLASKRKKKVTSIDKANVLESSKLWRTVTEEVALRYPDVELEHILVDAAAMELIRNPGRFDVIVTENLFGDILSDEASVLAGSLGMLPSASHAEKGPSLYEPIHGSAPDIAGKNKANPIAMMRSVAMMLGQSFGLTREGCAIEEAISAVLKLGKCTADIGGTETTTSFTKAVMQEMEEQALVGRGR.

76-87 is an NAD(+) binding site; it reads GPRWDSAKERPE. 4 residues coordinate substrate: R94, R104, R130, and D215. Mg(2+) contacts are provided by D215, D239, and D243. 273–285 contacts NAD(+); sequence GSAPDIAGKNKAN.

This sequence belongs to the isocitrate and isopropylmalate dehydrogenases family. LeuB type 1 subfamily. As to quaternary structure, homodimer. The cofactor is Mg(2+). It depends on Mn(2+) as a cofactor.

The protein localises to the cytoplasm. The enzyme catalyses (2R,3S)-3-isopropylmalate + NAD(+) = 4-methyl-2-oxopentanoate + CO2 + NADH. The protein operates within amino-acid biosynthesis; L-leucine biosynthesis; L-leucine from 3-methyl-2-oxobutanoate: step 3/4. Functionally, catalyzes the oxidation of 3-carboxy-2-hydroxy-4-methylpentanoate (3-isopropylmalate) to 3-carboxy-4-methyl-2-oxopentanoate. The product decarboxylates to 4-methyl-2 oxopentanoate. This chain is 3-isopropylmalate dehydrogenase, found in Bacillus cereus (strain ATCC 10987 / NRS 248).